Reading from the N-terminus, the 446-residue chain is tRNA modification GTPase MnmE (446 aa).

R24, E81, and K120 together coordinate (6S)-5-formyl-5,6,7,8-tetrahydrofolate. Residues 216 to 368 (GLHAVLIGPP…LHIRLRALAL (153 aa)) form the TrmE-type G domain. K(+) is bound at residue N226. GTP-binding positions include 226–231 (NAGKSS), 245–251 (TDVAGTT), and 270–273 (DTAG). Position 230 (S230) interacts with Mg(2+). 3 residues coordinate K(+): T245, V247, and T250. Residue T251 participates in Mg(2+) binding. K446 is a binding site for (6S)-5-formyl-5,6,7,8-tetrahydrofolate.

Belongs to the TRAFAC class TrmE-Era-EngA-EngB-Septin-like GTPase superfamily. TrmE GTPase family. In terms of assembly, homodimer. Heterotetramer of two MnmE and two MnmG subunits. The cofactor is K(+).

The protein resides in the cytoplasm. Exhibits a very high intrinsic GTPase hydrolysis rate. Involved in the addition of a carboxymethylaminomethyl (cmnm) group at the wobble position (U34) of certain tRNAs, forming tRNA-cmnm(5)s(2)U34. This is tRNA modification GTPase MnmE from Xanthomonas euvesicatoria pv. vesicatoria (strain 85-10) (Xanthomonas campestris pv. vesicatoria).